The following is a 466-amino-acid chain: MNKIRTRYAPSPTGFLHIGGARTALFCYLFAKHFNGDFIFRLEDTDVKRNVEGGEASQLENLAWLGIIPDESPLKPNLKYGKYRQSEKLDRYKEVLDMLLEKNLAYKAYDLPEELEAQKLESEQKGFASFRYDPSWLKISDEEKAKRDLNNQFSYRIRMPKDKVFSWNDLVRGEISFSSNEISDWVIFKSDNYPTYNFAVVVDDHDMQISHVLRGEEHIGNTPKQLALYDYLNWSSPQYGHLTIITDMGGKKLSKRDLSLKQFIEDYKNEGYIPHAIFNFLALLGWTSEDAKEVMSKKELISKFNPARLSKSPSKFDVNKMSWFSKIYMKNQSNEEVQSHLDFKDFNSNSSWKEIFTSTFKESATTYLELQKALNNYLNPMSSELVLNEEELKVVKEFKANLKSFTVEEIQAAINLTASNLKLKGKALFMPIRKACTYLEHGPELAKAIYLFGEKLITERLAKYEN.

The 'HIGH' region motif lies at 10 to 20 (PSPTGFLHIGG). Positions 252–256 (KLSKR) match the 'KMSKS' region motif. An ATP-binding site is contributed by Lys255.

This sequence belongs to the class-I aminoacyl-tRNA synthetase family. Glutamate--tRNA ligase type 1 subfamily. As to quaternary structure, monomer.

It localises to the cytoplasm. The catalysed reaction is tRNA(Glu) + L-glutamate + ATP = L-glutamyl-tRNA(Glu) + AMP + diphosphate. In terms of biological role, catalyzes the attachment of glutamate to tRNA(Glu) in a two-step reaction: glutamate is first activated by ATP to form Glu-AMP and then transferred to the acceptor end of tRNA(Glu). This Mycoplasmopsis synoviae (strain 53) (Mycoplasma synoviae) protein is Glutamate--tRNA ligase.